The chain runs to 1358 residues: Phosphoribosylformylglycinamidine synthase (1358 aa).

Thr2 is modified (N-acetylthreonine). The tract at residues 339 to 363 (AVSPFPGAATGSGGEIRDEGATGRG) is disordered. ATP-binding positions include 345-356 (GAATGSGGEIRD), 424-426 (NGY), and Ala719. Mg(2+) is bound by residues Asp720, Glu762, Asn766, and Asp930. Ser932 is an ATP binding site. Residues 1093-1358 (VAILREQGVN…LFRSARRWVG (266 aa)) form the Glutamine amidotransferase type-1 domain. Cys1187 serves as the catalytic Nucleophile. Active-site residues include His1319 and Glu1321.

In the N-terminal section; belongs to the FGAMS family.

The protein resides in the cytoplasm. The enzyme catalyses N(2)-formyl-N(1)-(5-phospho-beta-D-ribosyl)glycinamide + L-glutamine + ATP + H2O = 2-formamido-N(1)-(5-O-phospho-beta-D-ribosyl)acetamidine + L-glutamate + ADP + phosphate + H(+). It participates in purine metabolism; IMP biosynthesis via de novo pathway; 5-amino-1-(5-phospho-D-ribosyl)imidazole from N(2)-formyl-N(1)-(5-phospho-D-ribosyl)glycinamide: step 1/2. In terms of biological role, phosphoribosylformylglycinamidine synthase involved in the purines biosynthetic pathway. Catalyzes the ATP-dependent conversion of formylglycinamide ribonucleotide (FGAR) and glutamine to yield formylglycinamidine ribonucleotide (FGAM) and glutamate. The polypeptide is Phosphoribosylformylglycinamidine synthase (ADE6) (Saccharomyces cerevisiae (strain ATCC 204508 / S288c) (Baker's yeast)).